We begin with the raw amino-acid sequence, 113 residues long: U11-theraphotoxin-Hhn1a (113 aa).

An N-terminal signal peptide occupies residues 1-21 (MNTVRATFLLVFVLAVSLGQA). A propeptide spanning residues 22-74 (DKDENRMEMQEKTEQGKSYLDFAENLLLQKLEELEAKLLEEDSEESRNSRQKR) is cleaved from the precursor. The span at 60–69 (LEEDSEESRN) shows a compositional bias: basic and acidic residues. The tract at residues 60–82 (LEEDSEESRNSRQKRCIGEGVPC) is disordered. 3 disulfide bridges follow: Cys75/Cys90, Cys82/Cys95, and Cys89/Cys110.

Belongs to the neurotoxin 14 (magi-1) family. 01 (HNTX-16) subfamily. As to expression, expressed by the venom gland.

It is found in the secreted. Functionally, probable ion channel inhibitor. This chain is U11-theraphotoxin-Hhn1a, found in Cyriopagopus hainanus (Chinese bird spider).